A 277-amino-acid chain; its full sequence is Membrane protein insertase YidC 2 (277 aa).

The signal sequence occupies residues 1–22 (MKKYRKILAMLAVLAIVLVLSG). A lipid anchor (N-palmitoyl cysteine) is attached at Cys23. Cys23 carries S-diacylglycerol cysteine lipidation. 5 helical membrane-spanning segments follow: residues 35–55 (FWDG…SNLF), 60–80 (GLGI…LMIF), 130–150 (ASML…QAIW), 170–190 (PYYV…WLAM), and 208–228 (PVII…YWVI). A compositionally biased stretch (basic and acidic residues) spans 251–266 (EAKKQAERDRKRTLEK). Residues 251–277 (EAKKQAERDRKRTLEKARKRAIRNHKR) form a disordered region. The segment covering 267 to 277 (ARKRAIRNHKR) has biased composition (basic residues).

Belongs to the OXA1/ALB3/YidC family. Type 2 subfamily.

It is found in the cell membrane. Its function is as follows. Required for the insertion and/or proper folding and/or complex formation of integral membrane proteins into the membrane. Involved in integration of membrane proteins that insert both dependently and independently of the Sec translocase complex, as well as at least some lipoproteins. The polypeptide is Membrane protein insertase YidC 2 (Lactiplantibacillus plantarum (strain ATCC BAA-793 / NCIMB 8826 / WCFS1) (Lactobacillus plantarum)).